Consider the following 406-residue polypeptide: ATP synthase subunit a (406 aa).

Composition is skewed to low complexity over residues 22-31 and 43-59; these read AGEHGAPAPE and DAAG…AEHG. Residues 22–76 form a disordered region; it reads AGEHGAPAPEVATPAEGHGARDAAGAATDPHGAAAEHGAAAHEDPAQHGAAGAEA. 6 helical membrane passes run 151–171, 209–229, 232–252, 278–298, 304–324, and 351–371; these read KHVV…FAAV, FVPY…FGLV, AATA…TFLI, LWPL…TKPF, LFAN…LIFA, and VQAY…VAHH. The disordered stretch occupies residues 375-406; that stretch reads DEHEEHGHGAAATGGAHGSHGSHVAGASPGHG. Residues 383 to 406 are compositionally biased toward low complexity; that stretch reads GAAATGGAHGSHGSHVAGASPGHG.

Belongs to the ATPase A chain family. As to quaternary structure, F-type ATPases have 2 components, CF(1) - the catalytic core - and CF(0) - the membrane proton channel. CF(1) has five subunits: alpha(3), beta(3), gamma(1), delta(1), epsilon(1). CF(0) has three main subunits: a(1), b(2) and c(9-12). The alpha and beta chains form an alternating ring which encloses part of the gamma chain. CF(1) is attached to CF(0) by a central stalk formed by the gamma and epsilon chains, while a peripheral stalk is formed by the delta and b chains.

It localises to the cell inner membrane. In terms of biological role, key component of the proton channel; it plays a direct role in the translocation of protons across the membrane. The sequence is that of ATP synthase subunit a from Anaeromyxobacter sp. (strain Fw109-5).